The following is a 505-amino-acid chain: Sucrose porin (505 aa).

Residues 1-22 (MYKKRKLAILIALLTGTAAAHG) form the signal peptide. Residues 44-94 (ETRASTAESRAASAEQKVQQLTQQQQQTQATTQQVARRTTQLEEKAERPGG) are disordered. The segment covering 46-82 (RASTAESRAASAEQKVQQLTQQQQQTQATTQQVARRT) has biased composition (low complexity). Residues 83–93 (TQLEEKAERPG) show a composition bias toward basic and acidic residues.

Belongs to the porin LamB (TC 1.B.3) family. As to quaternary structure, homotrimer.

The protein localises to the cell outer membrane. Its function is as follows. Porin for sucrose uptake. The chain is Sucrose porin (scrY) from Klebsiella pneumoniae.